A 302-amino-acid polypeptide reads, in one-letter code: GTPase Era (302 aa).

The Era-type G domain maps to 9–177 (YCGFIAIVGR…EKIVRQSLRE (169 aa)). The tract at residues 17 to 24 (GRPNVGKS) is G1. 17–24 (GRPNVGKS) provides a ligand contact to GTP. Positions 43-47 (QTTRH) are G2. Residues 64 to 67 (DTPG) form a G3 region. GTP contacts are provided by residues 64–68 (DTPGL) and 126–129 (NKVD). The G4 stretch occupies residues 126–129 (NKVD). The tract at residues 156–158 (ISA) is G5. The KH type-2 domain maps to 208–285 (TGEELPYSVT…HLELWVKVKS (78 aa)).

The protein belongs to the TRAFAC class TrmE-Era-EngA-EngB-Septin-like GTPase superfamily. Era GTPase family. Monomer.

It is found in the cytoplasm. Its subcellular location is the cell inner membrane. An essential GTPase that binds both GDP and GTP, with rapid nucleotide exchange. Plays a role in 16S rRNA processing and 30S ribosomal subunit biogenesis and possibly also in cell cycle regulation and energy metabolism. In Haemophilus influenzae (strain PittGG), this protein is GTPase Era.